The chain runs to 1352 residues: MTLLMCLLMSLLIFVRGCDSQFVDMSPASNTSECLESQVDAAAFSKLMWPYPIDPSKVDGIIYPLGRTYSNITLAYTGLFPLQGDLGSQYLYSVSHAVGHDGDPTKAYISNYSLLVNDFDNGFVVRIGAAANSTGTIVISPSVNTKIKKAYPAFILGSSLTNTSAGQPLYANYSLTIIPDGCGTVLHAFYCILKPRTVNRCPSGTGYVSYFIYETVHNDCQSTINRNASLNSFKSFFDLVNCTFFNSWDITADETKEWFGITQDTQGVHLYSSRKGDLYGGNMFRFATLPVYEGIKYYTVIPRSFRSKANKREAWAAFYVYKLHQLTYLLDFSVDGYIRRAIDCGHDDLSQLHCSYTSFEVDTGVYSVSSYEASATGTFIEQPNATECDFSPMLTGVAPQVYNFKRLVFSNCNYNLTKLLSLFAVDEFSCNGISPDSIARGCYSTLTVDYFAYPLSMKSYIRPGSAGNIPLYNYKQSFANPTCRVMASVLANVTITKPHAYGYISKCSRLTGANQDVETPLYINPGEYSICRDFSPGGFSEDGQVFKRTLTQFEGGGLLIGVGTRVPMTDNLQMSFIISVQYGTGTDSVCPMLDLGDSLTITNRLGKCVDYSLYGVTGRGVFQNCTAVGVKQQRFVYDSFDNLVGYYSDDGNYYCVRPCVSVPVSVIYDKSTNLHATLFGSVACEHVTTMMSQFSRLTQSNLRRRDSNIPLQTAVGCVIGLSNNSLVVSDCKLPLGQSLCAVPPVSTFRSYSASQFQLAVLNYTSPIVVTPINSSGFTAAIPTNFSFSVTQEYIETSIQKVTVDCKQYVCNGFTRCEKLLVEYGQFCSKINQALHGANLRQDESVYSLYSNIKTTSTQTLEYGLNGDFNLTLLQVPQIGGSSSSYRSAIEDLLFDKVTIADPGYMQGYDDCMKQGPQSARDLICAQYVSGYKVLPPLYDPNMEAAYTSSLLGSIAGAGWTAGLSSFAAIPFAQSMFYRLNGVGITQQVLSENQKLIANKFNQALGAMQTGFTTSNLAFSKVQDAVNANAQALSKLASELSNTFGAISSSISDILARLDTVEQDAQIDRLINGRLISLNAFVSQQLVRSETAARSAQLASDKVNECVKSQSKRNGFCGSGTHIVSFVVNAPNGFYFFHVGYVPTNYTNVTAAYGLCNNNNPPLCIAPIDGYFITNQTTTYSVDTEWYYTGSSFYKPEPITQANSRYVSSDVKFDKLENNLPPPLLENSTDVDFKDELEEFFKNVTSHGPNFAEISKINTTLLDLSDEMAMLQEVVKQLNDSYIDLKELGNYTYYNKWPWYVWLGFIAGLVALLLCVFFLLCCTGCGTSCLGKMKCKNCCDSYEEYDVEKIHVH.

Positions 1–12 (MTLLMCLLMSLL) are cleaved as a signal peptide. The Extracellular segment spans residues 13-1297 (IFVRGCDSQF…GNYTYYNKWP (1285 aa)). Residues 21-356 (QFVDMSPASN…DDLSQLHCSY (336 aa)) form the BetaCoV S1-NTD domain. 8 N-linked (GlcNAc...) asparagine; by host glycosylation sites follow: Asn30, Asn71, Asn111, Asn132, Asn162, Asn172, Asn227, and Asn241. Cystine bridges form between Cys191/Cys242 and Cys344/Cys354. A glycan (N-linked (GlcNAc...) asparagine; by host) is linked at Asn384. Residues 386 to 592 (TECDFSPMLT…GTGTDSVCPM (207 aa)) enclose the BetaCoV S1-CTD domain. The cysteines at positions 388 and 412 are disulfide-linked. Asn415 carries N-linked (GlcNAc...) asparagine; by host glycosylation. 2 cysteine pairs are disulfide-bonded: Cys430–Cys483 and Cys442–Cys590. Residues Asn492, Asn624, Asn723, Asn762, Asn773, Asn784, and Asn869 are each glycosylated (N-linked (GlcNAc...) asparagine; by host). Fusion peptide regions lie at residues 887-908 (SAIEDLLFDKVTIADPGYMQGY) and 906-928 (QGYDDCMKQGPQSARDLICAQYV). An intrachain disulfide couples Cys911 to Cys924. The heptad repeat 1 stretch occupies residues 993–1043 (QKLIANKFNQALGAMQTGFTTSNLAFSKVQDAVNANAQALSKLASELSNTF). The stretch at 1022 to 1066 (QDAVNANAQALSKLASELSNTFGAISSSISDILARLDTVEQDAQI) forms a coiled coil. Residues Asn1144, Asn1147, Asn1174, Asn1226, Asn1242, Asn1257, Asn1278, and Asn1289 are each glycosylated (N-linked (GlcNAc...) asparagine; by host). The heptad repeat 2 stretch occupies residues 1247 to 1286 (GPNFAEISKINTTLLDLSDEMAMLQEVVKQLNDSYIDLKE). Positions 1259–1287 (TLLDLSDEMAMLQEVVKQLNDSYIDLKEL) form a coiled coil. A helical transmembrane segment spans residues 1298-1318 (WYVWLGFIAGLVALLLCVFFL). At 1319 to 1352 (LCCTGCGTSCLGKMKCKNCCDSYEEYDVEKIHVH) the chain is on the cytoplasmic side. Residues 1350–1352 (HVH) carry the KxHxx motif.

The protein belongs to the betacoronaviruses spike protein family. As to quaternary structure, homotrimer; each monomer consists of a S1 and a S2 subunit. The resulting peplomers protrude from the virus surface as spikes. In terms of processing, specific enzymatic cleavages in vivo yield mature proteins. The precursor is processed into S1 and S2 by host cell furin or another cellular protease to yield the mature S1 and S2 proteins. Additionally, a second cleavage leads to the release of a fusion peptide after viral attachment to host cell receptor. The cytoplasmic Cys-rich domain is palmitoylated. Spike glycoprotein is digested within host endosomes.

It localises to the virion membrane. The protein localises to the host endoplasmic reticulum-Golgi intermediate compartment membrane. The protein resides in the host cell membrane. Functionally, attaches the virion to the cell membrane by interacting with host receptor, initiating the infection. Its function is as follows. Mediates fusion of the virion and cellular membranes by acting as a class I viral fusion protein. Under the current model, the protein has at least three conformational states: pre-fusion native state, pre-hairpin intermediate state, and post-fusion hairpin state. During viral and target cell membrane fusion, the coiled coil regions (heptad repeats) assume a trimer-of-hairpins structure, positioning the fusion peptide in close proximity to the C-terminal region of the ectodomain. The formation of this structure appears to drive apposition and subsequent fusion of viral and target cell membranes. In terms of biological role, acts as a viral fusion peptide which is unmasked following S2 cleavage occurring upon virus endocytosis. The chain is Spike glycoprotein from Bat coronavirus HKU4 (BtCoV).